A 669-amino-acid chain; its full sequence is Putative transcription factor SOX-14 (669 aa).

Over residues 1-12 (MIAKPNQATTEP) the composition is skewed to polar residues. Disordered regions lie at residues 1–149 (MIAK…EMTL), 254–336 (YKYR…PKYE), and 419–439 (SSLT…MDNI). Low complexity predominate over residues 17–37 (RPGTVPTVPATTPARPATITI). A compositionally biased stretch (pro residues) spans 52–71 (TLPPFSPSPSPASSPSPAPA). Polar residues predominate over residues 75–84 (GAQKTQSQAA). The segment covering 88–105 (PAAVASPSAPVAAAAPKT) has biased composition (low complexity). Basic and acidic residues predominate over residues 130 to 145 (RESEMDGERSPSHSGH). Residues 187 to 255 (IKRPMNAFMV…LHMIEYPNYK (69 aa)) constitute a DNA-binding region (HMG box). Residues 284–294 (TTNNNNSLTTL) are compositionally biased toward low complexity. Residues 295–318 (AINGTTTAGRKSKRSTSTCQSGSA) show a composition bias toward polar residues. Positions 322–336 (LRNDSGDTSSKPKYE) are enriched in basic and acidic residues. A compositionally biased stretch (polar residues) spans 419–431 (SSLTQSQHNQSDP).

Its subcellular location is the nucleus. The protein is Putative transcription factor SOX-14 (Sox14) of Drosophila melanogaster (Fruit fly).